Reading from the N-terminus, the 297-residue chain is Heterogeneous nuclear ribonucleoprotein D-like (297 aa).

The segment at 1-21 (MTGFGATPDFNEGSKINASKN) is disordered. 2 RRM domains span residues 26 to 108 (GKMF…KGKE) and 111 to 190 (KKVF…QPKE). The interval 192 to 224 (YRQQQQKQQKGGRGAATGRGGARGRGRGQGWNQ) is disordered. Positions 202-222 (GGRGAATGRGGARGRGRGQGW) are enriched in gly residues.

The protein localises to the nucleus. Its subcellular location is the cytoplasm. Acts as a transcriptional regulator. Binds DNA and RNA. This chain is Heterogeneous nuclear ribonucleoprotein D-like (hnrnpdl), found in Xenopus tropicalis (Western clawed frog).